The primary structure comprises 418 residues: STE20-related kinase adapter protein beta (418 aa).

The region spanning 58 to 369 (YELQVEIGRG…ASSLLSHVFF (312 aa)) is the Protein kinase domain. ATP is bound by residues 64–72 (IGRGFDNLT) and lysine 89.

The protein belongs to the protein kinase superfamily. STE Ser/Thr protein kinase family. STE20 subfamily. Component of a trimeric complex composed of STK11/LKB1, STRAD (STRADA or STRADB) and CAB39/MO25 (CAB39/MO25alpha or CAB39L/MO25beta): the complex tethers STK11/LKB1 in the cytoplasm and stimulates its catalytic activity. Interacts with BIRC4/XIAP. These two proteins are likely to coexist in a complex with TAK1, TRAF6, TAB1 and TAB2. In terms of tissue distribution, highly expressed in heart, skeletal muscle, testis, liver and colon.

It is found in the nucleus. It localises to the cytoplasm. Functionally, pseudokinase which, in complex with CAB39/MO25 (CAB39/MO25alpha or CAB39L/MO25beta), binds to and activates STK11/LKB1. Adopts a closed conformation typical of active protein kinases and binds STK11/LKB1 as a pseudosubstrate, promoting conformational change of STK11/LKB1 in an active conformation. This chain is STE20-related kinase adapter protein beta (STRADB), found in Homo sapiens (Human).